The primary structure comprises 340 residues: Ferrochelatase (340 aa).

Fe cation is bound by residues H189 and E292.

The protein belongs to the ferrochelatase family.

The protein localises to the cytoplasm. The catalysed reaction is heme b + 2 H(+) = protoporphyrin IX + Fe(2+). It functions in the pathway porphyrin-containing compound metabolism; protoheme biosynthesis; protoheme from protoporphyrin-IX: step 1/1. Catalyzes the ferrous insertion into protoporphyrin IX. The polypeptide is Ferrochelatase (Pseudomonas fluorescens biotype C).